The following is a 257-amino-acid chain: uncharacterized protein (257 aa).

Disordered stretches follow at residues 1 to 164 (MERS…AGAC) and 225 to 257 (TAWS…RARA). Residues 10–28 (CGEEPRSGSRRLPKAEGDK) show a composition bias toward basic and acidic residues. Basic residues predominate over residues 54-65 (RPNRASGRRRRS). Positions 125–139 (RPTPRPCAGPAPPPA) are enriched in pro residues. The segment covering 144–162 (RCRRPRRWPRAGRRGRRAG) has biased composition (basic residues).

This is an uncharacterized protein from Homo sapiens (Human).